Here is an 88-residue protein sequence, read N- to C-terminus: Small ribosomal subunit protein uS17 (88 aa).

Belongs to the universal ribosomal protein uS17 family. In terms of assembly, part of the 30S ribosomal subunit.

Functionally, one of the primary rRNA binding proteins, it binds specifically to the 5'-end of 16S ribosomal RNA. This chain is Small ribosomal subunit protein uS17, found in Pseudomonas putida (strain ATCC 700007 / DSM 6899 / JCM 31910 / BCRC 17059 / LMG 24140 / F1).